A 132-amino-acid polypeptide reads, in one-letter code: Small ribosomal subunit protein uS8 (132 aa).

Belongs to the universal ribosomal protein uS8 family. In terms of assembly, part of the 30S ribosomal subunit. Contacts proteins S5 and S12.

Its function is as follows. One of the primary rRNA binding proteins, it binds directly to 16S rRNA central domain where it helps coordinate assembly of the platform of the 30S subunit. The chain is Small ribosomal subunit protein uS8 from Macrococcus caseolyticus (strain JCSC5402) (Macrococcoides caseolyticum).